We begin with the raw amino-acid sequence, 595 residues long: D-xylonate dehydratase (595 aa).

[2Fe-2S] cluster is bound at residue C64. Residue E96 coordinates Mg(2+). C132 serves as a coordination point for [2Fe-2S] cluster. D133 is a binding site for Mg(2+). Residue C205 participates in [2Fe-2S] cluster binding. E467 is a Mg(2+) binding site.

The protein belongs to the IlvD/Edd family. In terms of assembly, homotetramer. It depends on [2Fe-2S] cluster as a cofactor. Mg(2+) is required as a cofactor.

The catalysed reaction is D-xylonate = 2-dehydro-3-deoxy-D-arabinonate + H2O. It catalyses the reaction D-gluconate = 2-dehydro-3-deoxy-D-gluconate + H2O. It functions in the pathway carbohydrate metabolism; D-xylose degradation. In terms of biological role, catalyzes the dehydration of D-xylonate to 2-dehydro-3-deoxy-D-arabinonate during D-xylose degradation. Can also dehydrate D-gluconate, with similar catalytic efficiency. Has weak activity with D-galactonate, D-fuconate and L-arabinonate. This Caulobacter vibrioides (strain ATCC 19089 / CIP 103742 / CB 15) (Caulobacter crescentus) protein is D-xylonate dehydratase.